The sequence spans 414 residues: Serine hydroxymethyltransferase (414 aa).

Residues leucine 117 and 121–123 each bind (6S)-5,6,7,8-tetrahydrofolate; that span reads GHL. An N6-(pyridoxal phosphate)lysine modification is found at lysine 226. 349–351 contributes to the (6S)-5,6,7,8-tetrahydrofolate binding site; it reads SPF.

This sequence belongs to the SHMT family. In terms of assembly, homodimer. Pyridoxal 5'-phosphate is required as a cofactor.

Its subcellular location is the cytoplasm. The enzyme catalyses (6R)-5,10-methylene-5,6,7,8-tetrahydrofolate + glycine + H2O = (6S)-5,6,7,8-tetrahydrofolate + L-serine. Its pathway is one-carbon metabolism; tetrahydrofolate interconversion. It functions in the pathway amino-acid biosynthesis; glycine biosynthesis; glycine from L-serine: step 1/1. Catalyzes the reversible interconversion of serine and glycine with tetrahydrofolate (THF) serving as the one-carbon carrier. Also exhibits THF-independent aldolase activity toward beta-hydroxyamino acids, producing glycine and aldehydes, via a retro-aldol mechanism. The polypeptide is Serine hydroxymethyltransferase (Methanospirillum hungatei JF-1 (strain ATCC 27890 / DSM 864 / NBRC 100397 / JF-1)).